The sequence spans 94 residues: Phosphoribosyl-ATP pyrophosphatase (94 aa).

Belongs to the PRA-PH family.

Its subcellular location is the cytoplasm. The catalysed reaction is 1-(5-phospho-beta-D-ribosyl)-ATP + H2O = 1-(5-phospho-beta-D-ribosyl)-5'-AMP + diphosphate + H(+). The protein operates within amino-acid biosynthesis; L-histidine biosynthesis; L-histidine from 5-phospho-alpha-D-ribose 1-diphosphate: step 2/9. The sequence is that of Phosphoribosyl-ATP pyrophosphatase from Saccharolobus islandicus (strain M.16.27) (Sulfolobus islandicus).